We begin with the raw amino-acid sequence, 448 residues long: C4-dicarboxylate transport protein (448 aa).

The next 9 helical transmembrane spans lie at 9 to 29 (SLYF…HFYP), 59 to 79 (LIKM…IAGM), 91 to 111 (VALL…LLVI), 159 to 179 (AFAN…GFAL), 203 to 223 (IVNM…AFTI), 237 to 257 (LIIC…GTIS), 312 to 332 (GYSF…IFIA), 345 to 365 (ITLL…TGSG), and 367 to 387 (IVMA…LALI).

This sequence belongs to the dicarboxylate/amino acid:cation symporter (DAACS) (TC 2.A.23) family.

The protein localises to the cell inner membrane. Functionally, responsible for the transport of dicarboxylates such as succinate, fumarate, and malate from the periplasm across the membrane. The sequence is that of C4-dicarboxylate transport protein from Acinetobacter baylyi (strain ATCC 33305 / BD413 / ADP1).